The primary structure comprises 201 residues: Probable GTP-binding protein EngB (201 aa).

Residues 22 to 195 form the EngB-type G domain; it reads SLPEIAFCGR…MEQLEMILKY (174 aa). Residues 30–37, 57–61, 75–78, 142–145, and 174–176 each bind GTP; these read GRSNVGKS, GKTRT, DLPG, TKLD, and YSS. Positions 37 and 59 each coordinate Mg(2+).

Belongs to the TRAFAC class TrmE-Era-EngA-EngB-Septin-like GTPase superfamily. EngB GTPase family. It depends on Mg(2+) as a cofactor.

Functionally, necessary for normal cell division and for the maintenance of normal septation. This chain is Probable GTP-binding protein EngB, found in Finegoldia magna (strain ATCC 29328 / DSM 20472 / WAL 2508) (Peptostreptococcus magnus).